A 302-amino-acid chain; its full sequence is MPVSTSGFDAPARLGTLLTAMATPFKPDGSLDIETAARLATRLVDAGCDGLVVSGTTGESPTTTDDEKILLLRTVLEAVGDRARIVAGAGTYDTAHSIHLAKASAAEGAHGLLVVTPYYSRPPQAGLVAHFTAVADATDLPNILYDIPPRSVVPIEWDTIRRLAQHPNIVAIKDAKADLHGGGQIIAETGLAYYSGDDALNLPWLAMGAVGFISVWGHLAASQLRDMLSAFASGDVATARKINVALGPLSAAQSRLGGVTLSKAGLRLQGFEVGDPRLPQIPANDVQLQALAADMRAASVLR.

Pyruvate is bound at residue Thr57. Residue Tyr145 is the Proton donor/acceptor of the active site. Lys173 (schiff-base intermediate with substrate) is an active-site residue. Ile213 is a binding site for pyruvate.

Belongs to the DapA family. Homotetramer; dimer of dimers.

The protein resides in the cytoplasm. The enzyme catalyses L-aspartate 4-semialdehyde + pyruvate = (2S,4S)-4-hydroxy-2,3,4,5-tetrahydrodipicolinate + H2O + H(+). The protein operates within amino-acid biosynthesis; L-lysine biosynthesis via DAP pathway; (S)-tetrahydrodipicolinate from L-aspartate: step 3/4. Its function is as follows. Catalyzes the condensation of (S)-aspartate-beta-semialdehyde [(S)-ASA] and pyruvate to 4-hydroxy-tetrahydrodipicolinate (HTPA). In Mycolicibacterium gilvum (strain PYR-GCK) (Mycobacterium gilvum (strain PYR-GCK)), this protein is 4-hydroxy-tetrahydrodipicolinate synthase.